The chain runs to 203 residues: ATP-dependent Clp protease proteolytic subunit 2 (203 aa).

Residue Ser-101 is the Nucleophile of the active site. His-126 is a catalytic residue.

Belongs to the peptidase S14 family. As to quaternary structure, fourteen ClpP subunits assemble into 2 heptameric rings which stack back to back to give a disk-like structure with a central cavity, resembling the structure of eukaryotic proteasomes.

It localises to the cytoplasm. The catalysed reaction is Hydrolysis of proteins to small peptides in the presence of ATP and magnesium. alpha-casein is the usual test substrate. In the absence of ATP, only oligopeptides shorter than five residues are hydrolyzed (such as succinyl-Leu-Tyr-|-NHMec, and Leu-Tyr-Leu-|-Tyr-Trp, in which cleavage of the -Tyr-|-Leu- and -Tyr-|-Trp bonds also occurs).. Cleaves peptides in various proteins in a process that requires ATP hydrolysis. Has a chymotrypsin-like activity. Plays a major role in the degradation of misfolded proteins. The sequence is that of ATP-dependent Clp protease proteolytic subunit 2 from Prochlorococcus marinus (strain MIT 9312).